We begin with the raw amino-acid sequence, 405 residues long: MATEQTAITRATFDEVILPVYAPADFIPVKGKGSRVWDQQGKEYIDFAGGIAVTALGHCHPALVEALKSQGETLWHTSNVFTNEPALRLGRKLIDATFAERVLFMNSGTEANETAFKLARHYACVRHSPFKTKIIAFHNAFHGRSLFTVSVGGQPKYSDGFGPKPADIIHVPFNDLHAVKAVMDDHTCAVVVEPIQGEGGVQAATPEFLKGLRDLCDEHQALLVFDEVQCGMGRTGDLFAYMHYGVTPDILTSAKALGGGFPVSAMLTTQEIASAFHVGSHGSTYGGNPLACAVAGAAFDIINTPEVLQGIHTKRQQFVQHLQAIDEQFDIFSDIRGMGLLIGAELKPKYKGRARDFLYAGAEAGVMVLNAGADVMRFAPSLVVEEADIHEGMQRFAQAVGKVVA.

Pyridoxal 5'-phosphate contacts are provided by residues 108-109 (GT) and Phe141. Residue Arg144 coordinates N(2)-acetyl-L-ornithine. 226-229 (DEVQ) provides a ligand contact to pyridoxal 5'-phosphate. N6-(pyridoxal phosphate)lysine is present on Lys255. Position 283 (Ser283) interacts with N(2)-acetyl-L-ornithine. Thr284 is a pyridoxal 5'-phosphate binding site.

It belongs to the class-III pyridoxal-phosphate-dependent aminotransferase family. ArgD subfamily. Homodimer. Requires pyridoxal 5'-phosphate as cofactor.

The protein localises to the cytoplasm. The catalysed reaction is N(2)-acetyl-L-ornithine + 2-oxoglutarate = N-acetyl-L-glutamate 5-semialdehyde + L-glutamate. It catalyses the reaction N-succinyl-(2S,6S)-2,6-diaminopimelate + 2-oxoglutarate = (S)-2-succinylamino-6-oxoheptanedioate + L-glutamate. Its pathway is amino-acid biosynthesis; L-arginine biosynthesis; N(2)-acetyl-L-ornithine from L-glutamate: step 4/4. It functions in the pathway amino-acid biosynthesis; L-lysine biosynthesis via DAP pathway; LL-2,6-diaminopimelate from (S)-tetrahydrodipicolinate (succinylase route): step 2/3. Inhibited by gabaculine (Gcn). Functionally, involved in both the arginine and lysine biosynthetic pathways. The sequence is that of Acetylornithine/succinyldiaminopimelate aminotransferase from Salmonella typhimurium (strain LT2 / SGSC1412 / ATCC 700720).